We begin with the raw amino-acid sequence, 212 residues long: Large ribosomal subunit protein uL3 (212 aa).

The tract at residues 130–158 is disordered; sequence KRGSMTHGSKNHRLPGSTGAGTTPGRVYP.

This sequence belongs to the universal ribosomal protein uL3 family. As to quaternary structure, part of the 50S ribosomal subunit. Forms a cluster with proteins L14 and L19.

One of the primary rRNA binding proteins, it binds directly near the 3'-end of the 23S rRNA, where it nucleates assembly of the 50S subunit. In Gloeothece citriformis (strain PCC 7424) (Cyanothece sp. (strain PCC 7424)), this protein is Large ribosomal subunit protein uL3.